Consider the following 219-residue polypeptide: Protoglabretal synthase ISM2 (219 aa).

The next 5 membrane-spanning stretches (helical) occupy residues 26 to 46 (VHAWNGAATFLVMYGIWVLAG), 59 to 79 (LMIWWAVSGLIHIIHEGYWLF), 112 to 132 (AVVGIEGIAVIIVGPASLFAV), 144 to 164 (ILQLALALVQFYGSTLYFITA), and 178 to 198 (YYKYFIAQGGTWLLFPALIII). An EXPERA domain is found at 55–197 (TDKWLMIWWA…TWLLFPALII (143 aa)).

The protein belongs to the EBP family.

It is found in the membrane. The catalysed reaction is 7,8-epoxymelianol = protoglabretal. The protein operates within secondary metabolite biosynthesis; terpenoid biosynthesis. Its function is as follows. Isomerase involved in the biosynthesis of glabretanes triterpene natural products such as glabretal, a component with in vitro antiproliferative properties on lymphocytes. Catalyzes the conversion of 7,8-epoxymelianol to protoglabretal via skeletal rearrangements. The sequence is that of Protoglabretal synthase ISM2 from Ailanthus altissima (Tree-of-heaven).